A 769-amino-acid chain; its full sequence is Sensor protein DivL (769 aa).

The chain crosses the membrane as a helical span at residues 6–26; the sequence is LILAAAAGAVCLAISVALWSH. The region spanning 547-758 is the Histidine kinase domain; sequence NVSYELRTPL…TFTCHLPETQ (212 aa). Tyr550 bears the Phosphotyrosine; by autocatalysis mark.

In terms of processing, autophosphorylated.

The protein resides in the cell membrane. The catalysed reaction is ATP + protein L-histidine = ADP + protein N-phospho-L-histidine.. Functionally, required for cell division and growth. It catalyzes the phosphorylation of CtrA and activates transcription in vitro of the cell cycle-regulated fliF promoter. This is Sensor protein DivL (divL) from Caulobacter vibrioides (strain ATCC 19089 / CIP 103742 / CB 15) (Caulobacter crescentus).